We begin with the raw amino-acid sequence, 475 residues long: Adenosylhomocysteinase (475 aa).

The substrate site is built by Thr60, Asp133, and Glu198. 199–201 (TTT) is a binding site for NAD(+). The substrate site is built by Lys228 and Asp232. NAD(+) is bound by residues Asn233, 262 to 267 (GYGDVG), Glu285, Asn320, 341 to 343 (IGH), and Asn389.

Belongs to the adenosylhomocysteinase family. NAD(+) is required as a cofactor.

The protein resides in the cytoplasm. It catalyses the reaction S-adenosyl-L-homocysteine + H2O = L-homocysteine + adenosine. Its pathway is amino-acid biosynthesis; L-homocysteine biosynthesis; L-homocysteine from S-adenosyl-L-homocysteine: step 1/1. May play a key role in the regulation of the intracellular concentration of adenosylhomocysteine. This chain is Adenosylhomocysteinase, found in Syntrophotalea carbinolica (strain DSM 2380 / NBRC 103641 / GraBd1) (Pelobacter carbinolicus).